The chain runs to 158 residues: 6,7-dimethyl-8-ribityllumazine synthase (158 aa).

5-amino-6-(D-ribitylamino)uracil is bound by residues F22, 57 to 59 (AVE), and 81 to 83 (AVI). Position 86-87 (86-87 (GT)) interacts with (2S)-2-hydroxy-3-oxobutyl phosphate. H89 (proton donor) is an active-site residue. Residue F114 participates in 5-amino-6-(D-ribitylamino)uracil binding. R128 contacts (2S)-2-hydroxy-3-oxobutyl phosphate.

The protein belongs to the DMRL synthase family. In terms of assembly, forms an icosahedral capsid composed of 60 subunits, arranged as a dodecamer of pentamers.

The catalysed reaction is (2S)-2-hydroxy-3-oxobutyl phosphate + 5-amino-6-(D-ribitylamino)uracil = 6,7-dimethyl-8-(1-D-ribityl)lumazine + phosphate + 2 H2O + H(+). The protein operates within cofactor biosynthesis; riboflavin biosynthesis; riboflavin from 2-hydroxy-3-oxobutyl phosphate and 5-amino-6-(D-ribitylamino)uracil: step 1/2. Functionally, catalyzes the formation of 6,7-dimethyl-8-ribityllumazine by condensation of 5-amino-6-(D-ribitylamino)uracil with 3,4-dihydroxy-2-butanone 4-phosphate. This is the penultimate step in the biosynthesis of riboflavin. The chain is 6,7-dimethyl-8-ribityllumazine synthase from Shewanella piezotolerans (strain WP3 / JCM 13877).